Consider the following 359-residue polypeptide: Protein Wnt-5b (359 aa).

The first 17 residues, 1–17 (MPSLLLLFTAALLSSWA), serve as a signal peptide directing secretion. A disulfide bridge connects residues Cys-83 and Cys-94. 2 N-linked (GlcNAc...) asparagine glycosylation sites follow: Asn-93 and Asn-99. Cystine bridges form between Cys-133-Cys-141, Cys-143-Cys-161, Cys-217-Cys-231, Cys-219-Cys-226, Cys-288-Cys-319, Cys-304-Cys-314, Cys-318-Cys-358, Cys-334-Cys-349, Cys-336-Cys-346, and Cys-341-Cys-342. A lipid anchor (O-palmitoleoyl serine; by PORCN) is attached at Ser-223. Asn-291 and Asn-305 each carry an N-linked (GlcNAc...) asparagine glycan.

This sequence belongs to the Wnt family. Interacts with PORCN. Post-translationally, palmitoleoylation is required for efficient binding to frizzled receptors. Depalmitoleoylation leads to Wnt signaling pathway inhibition.

Its subcellular location is the secreted. The protein resides in the extracellular space. It localises to the extracellular matrix. In terms of biological role, ligand for members of the frizzled family of seven transmembrane receptors. Probable developmental protein. May be a signaling molecule which affects the development of discrete regions of tissues. Is likely to signal over only few cell diameters. The polypeptide is Protein Wnt-5b (WNT5B) (Homo sapiens (Human)).